The following is a 490-amino-acid chain: Muscarinic acetylcholine receptor M4 (490 aa).

The Extracellular portion of the chain corresponds to 1–42; it reads MHNLSAQPWQAKMANLTYDNVTLSNRSEVAIQPPTNYKTVEL. N-linked (GlcNAc...) asparagine glycosylation is found at Asn-3, Asn-15, Asn-20, and Asn-25. The chain crosses the membrane as a helical span at residues 43-64; that stretch reads VFIATVTGSLSLVTVVGNILVM. Over 65–78 the chain is Cytoplasmic; that stretch reads LSIKVNRQLQTVNN. The helical transmembrane segment at 79-99 threads the bilayer; sequence YFLFSLACADLIIGVFSMNLY. Residues 100-116 are Extracellular-facing; sequence TVYIIKGYWPLGAVVCD. Cys-115 and Cys-195 are joined by a disulfide. The chain crosses the membrane as a helical span at residues 117 to 138; sequence LWLALDYVVSNASVMNLLIISF. At 139–158 the chain is on the cytoplasmic side; the sequence is DRYFCVTKPLTYPARRTTKM. Residues 159–181 form a helical membrane-spanning segment; the sequence is AGLMIAAAWILSFILWAPAILFW. At 182-203 the chain is on the extracellular side; that stretch reads QFIVGKRTVHERECYIQFLSNP. The chain crosses the membrane as a helical span at residues 204–226; sequence AVTFGTAIAAFYLPVVIMTVLYI. At 227–412 the chain is on the cytoplasmic side; that stretch reads HISLASRSRV…AAREKKVTRT (186 aa). The segment covering 236 to 250 has biased composition (basic residues); sequence VRRHKPESRKERKGK. The segment at 236-343 is disordered; sequence VRRHKPESRK…HPRVNPTSKW (108 aa). A compositionally biased stretch (basic and acidic residues) spans 270–285; the sequence is RAVEVKEEVRNGKVDD. 2 stretches are compositionally biased toward polar residues: residues 287–296 and 304–314; these read PSAQTEATGQ and NESSTVSMTQT. A helical transmembrane segment spans residues 413–433; the sequence is IFAILLAFILTWTPYNVMVLI. Topologically, residues 434-447 are extracellular; that stretch reads NTFCETCVPETVWS. A helical membrane pass occupies residues 448–467; that stretch reads IGYWLCYVNSTINPACYALC. The Cytoplasmic segment spans residues 468–490; it reads NATFKKTFKHLLMCQYRNIGTAR.

The protein belongs to the G-protein coupled receptor 1 family. Muscarinic acetylcholine receptor subfamily. CHRM4 sub-subfamily. As to expression, expressed in heart and brain.

It is found in the cell membrane. The protein resides in the postsynaptic cell membrane. In terms of biological role, the muscarinic acetylcholine receptor mediates various cellular responses, including inhibition of adenylate cyclase, breakdown of phosphoinositides and modulation of potassium channels through the action of G proteins. Primary transducing effect is inhibition of adenylate cyclase. May couple to multiple functional responses in cell lines. This Gallus gallus (Chicken) protein is Muscarinic acetylcholine receptor M4 (CHRM4).